We begin with the raw amino-acid sequence, 201 residues long: dITP/XTP pyrophosphatase (201 aa).

A substrate-binding site is contributed by 9–14; that stretch reads TRNSGK. Positions 42 and 71 each coordinate Mg(2+). D71 (proton acceptor) is an active-site residue. Substrate is bound by residues S72, 156-159, K178, and 183-184; these read FGYD and HR.

Belongs to the HAM1 NTPase family. As to quaternary structure, homodimer. Mg(2+) serves as cofactor.

The enzyme catalyses XTP + H2O = XMP + diphosphate + H(+). The catalysed reaction is dITP + H2O = dIMP + diphosphate + H(+). It catalyses the reaction ITP + H2O = IMP + diphosphate + H(+). In terms of biological role, pyrophosphatase that catalyzes the hydrolysis of nucleoside triphosphates to their monophosphate derivatives, with a high preference for the non-canonical purine nucleotides XTP (xanthosine triphosphate), dITP (deoxyinosine triphosphate) and ITP. Seems to function as a house-cleaning enzyme that removes non-canonical purine nucleotides from the nucleotide pool, thus preventing their incorporation into DNA/RNA and avoiding chromosomal lesions. This Lactococcus lactis subsp. lactis (strain IL1403) (Streptococcus lactis) protein is dITP/XTP pyrophosphatase (ynbD).